Reading from the N-terminus, the 328-residue chain is tRNA uridine(34) hydroxylase (328 aa).

A Rhodanese domain is found at 130 to 224; it reads LDKDTVVLDT…YGKDPEVQGE (95 aa). Cys184 acts as the Cysteine persulfide intermediate in catalysis.

The protein belongs to the TrhO family.

The enzyme catalyses uridine(34) in tRNA + AH2 + O2 = 5-hydroxyuridine(34) in tRNA + A + H2O. In terms of biological role, catalyzes oxygen-dependent 5-hydroxyuridine (ho5U) modification at position 34 in tRNAs. This Streptococcus pneumoniae (strain P1031) protein is tRNA uridine(34) hydroxylase.